An 81-amino-acid chain; its full sequence is Small ribosomal subunit protein bS18 (81 aa).

The protein belongs to the bacterial ribosomal protein bS18 family. In terms of assembly, part of the 30S ribosomal subunit. Forms a tight heterodimer with protein bS6.

Binds as a heterodimer with protein bS6 to the central domain of the 16S rRNA, where it helps stabilize the platform of the 30S subunit. The chain is Small ribosomal subunit protein bS18 from Chlamydia muridarum (strain MoPn / Nigg).